A 538-amino-acid polypeptide reads, in one-letter code: ATP synthase subunit beta 2 (538 aa).

The span at 1–10 shows a compositional bias: polar residues; it reads MADPQATNGT. Positions 1–30 are disordered; that stretch reads MADPQATNGTGAACAERDASDVGDVSDVGD. 185–192 provides a ligand contact to ATP; that stretch reads GGAGVGKT. Positions 494-505 are enriched in basic and acidic residues; sequence AAAREADARREA. The interval 494–538 is disordered; sequence AAAREADARREAAAAASVAGPGTTSGTTSDPASGSAEPQGARHGR. Residues 506 to 529 show a composition bias toward low complexity; sequence AAAASVAGPGTTSGTTSDPASGSA.

The protein belongs to the ATPase alpha/beta chains family. In terms of assembly, F-type ATPases have 2 components, CF(1) - the catalytic core - and CF(0) - the membrane proton channel. CF(1) has five subunits: alpha(3), beta(3), gamma(1), delta(1), epsilon(1). CF(0) has three main subunits: a(1), b(2) and c(9-12). The alpha and beta chains form an alternating ring which encloses part of the gamma chain. CF(1) is attached to CF(0) by a central stalk formed by the gamma and epsilon chains, while a peripheral stalk is formed by the delta and b chains.

It is found in the cell inner membrane. The catalysed reaction is ATP + H2O + 4 H(+)(in) = ADP + phosphate + 5 H(+)(out). Produces ATP from ADP in the presence of a proton gradient across the membrane. The catalytic sites are hosted primarily by the beta subunits. The sequence is that of ATP synthase subunit beta 2 from Burkholderia pseudomallei (strain K96243).